The chain runs to 198 residues: Holliday junction branch migration complex subunit RuvA (198 aa).

Residues 1–63 are domain I; that stretch reads MYDYIKGQLT…EDAHLLFGFH (63 aa). The domain II stretch occupies residues 64–142; that stretch reads TEDEKDVFLK…EAPQETGNTK (79 aa). A flexible linker region spans residues 143-147; the sequence is ARSNK. A domain III region spans residues 148–198; the sequence is AGNTQLDEAIEALLALGYKAAELKKIRAFFEGTSETAEQYIKSALKLLMKG.

This sequence belongs to the RuvA family. In terms of assembly, homotetramer. Forms an RuvA(8)-RuvB(12)-Holliday junction (HJ) complex. HJ DNA is sandwiched between 2 RuvA tetramers; dsDNA enters through RuvA and exits via RuvB. An RuvB hexamer assembles on each DNA strand where it exits the tetramer. Each RuvB hexamer is contacted by two RuvA subunits (via domain III) on 2 adjacent RuvB subunits; this complex drives branch migration. In the full resolvosome a probable DNA-RuvA(4)-RuvB(12)-RuvC(2) complex forms which resolves the HJ.

It is found in the cytoplasm. Functionally, the RuvA-RuvB-RuvC complex processes Holliday junction (HJ) DNA during genetic recombination and DNA repair, while the RuvA-RuvB complex plays an important role in the rescue of blocked DNA replication forks via replication fork reversal (RFR). RuvA specifically binds to HJ cruciform DNA, conferring on it an open structure. The RuvB hexamer acts as an ATP-dependent pump, pulling dsDNA into and through the RuvAB complex. HJ branch migration allows RuvC to scan DNA until it finds its consensus sequence, where it cleaves and resolves the cruciform DNA. The protein is Holliday junction branch migration complex subunit RuvA of Streptococcus pyogenes serotype M28 (strain MGAS6180).